Reading from the N-terminus, the 279-residue chain is MGTKVKIGIIGGSGLDDSQIIENRTERVVNTHFGIPSDVLIEGKIAGVECVLLARHGRNHSIMPTNVNYRANIWALKTLGCTHVLVSTATGSLRDEIHPGDIVIPDNFIDRTTKRVQTFYDGNELLVGVCHIPMEPAFCSRTRDVLIETARELGIAGVHNSGTVVTIEGPRFSSKAESNLFRQWGAHLVNMTLVPEVVLAKEAGLCYAAIAMATDYDCWRETGEDVNVADVLATFKKNVTKVTELIINAIPKIAALDWTETIEELAKTVNTSIMLPHSN.

Phosphate contacts are provided by residues S13, 55–56 (RH), and 88–89 (TA). Residue M191 coordinates substrate. T192 contacts phosphate. 215 to 217 (DYD) lines the substrate pocket.

This sequence belongs to the PNP/MTAP phosphorylase family. MTAP subfamily. As to quaternary structure, homotrimer.

The protein resides in the cytoplasm. The protein localises to the nucleus. It catalyses the reaction S-methyl-5'-thioadenosine + phosphate = 5-(methylsulfanyl)-alpha-D-ribose 1-phosphate + adenine. It participates in amino-acid biosynthesis; L-methionine biosynthesis via salvage pathway; S-methyl-5-thio-alpha-D-ribose 1-phosphate from S-methyl-5'-thioadenosine (phosphorylase route): step 1/1. Functionally, catalyzes the reversible phosphorylation of S-methyl-5'-thioadenosine (MTA) to adenine and 5-methylthioribose-1-phosphate. Involved in the breakdown of MTA, a major by-product of polyamine biosynthesis. Responsible for the first step in the methionine salvage pathway after MTA has been generated from S-adenosylmethionine. Has broad substrate specificity with 6-aminopurine nucleosides as preferred substrates. The polypeptide is S-methyl-5'-thioadenosine phosphorylase (Anopheles darlingi (Mosquito)).